The sequence spans 313 residues: Protein-methionine-sulfoxide reductase catalytic subunit MsrP (313 aa).

A signal peptide (tat-type signal) is located at residues M1–A45. Residues N71, Y74–E75, C128, T163, N213, R218, and G229–K231 each bind Mo-molybdopterin.

It belongs to the MsrP family. In terms of assembly, heterodimer of a catalytic subunit (MsrP) and a heme-binding subunit (MsrQ). Mo-molybdopterin is required as a cofactor. Post-translationally, predicted to be exported by the Tat system. The position of the signal peptide cleavage has not been experimentally proven.

The protein localises to the periplasm. It carries out the reaction L-methionyl-[protein] + a quinone + H2O = L-methionyl-(S)-S-oxide-[protein] + a quinol. It catalyses the reaction L-methionyl-[protein] + a quinone + H2O = L-methionyl-(R)-S-oxide-[protein] + a quinol. Its function is as follows. Part of the MsrPQ system that repairs oxidized periplasmic proteins containing methionine sulfoxide residues (Met-O), using respiratory chain electrons. Thus protects these proteins from oxidative-stress damage caused by reactive species of oxygen and chlorine generated by the host defense mechanisms. MsrPQ is essential for the maintenance of envelope integrity under bleach stress, rescuing a wide series of structurally unrelated periplasmic proteins from methionine oxidation. The catalytic subunit MsrP is non-stereospecific, being able to reduce both (R-) and (S-) diastereoisomers of methionine sulfoxide. The polypeptide is Protein-methionine-sulfoxide reductase catalytic subunit MsrP (Agrobacterium fabrum (strain C58 / ATCC 33970) (Agrobacterium tumefaciens (strain C58))).